Reading from the N-terminus, the 298-residue chain is Phospholipase A1 (298 aa).

A disulfide bridge links C4 with C87. 2 N-linked (GlcNAc...) asparagine glycosylation sites follow: N88 and N122. S134 acts as the Nucleophile in catalysis. D162 acts as the Charge relay system in catalysis. 2 disulfide bridges follow: C173–C178 and C216–C225. Residue H227 is the Charge relay system of the active site. 3 disulfide bridges follow: C242/C266, C243/C291, and C259/C264.

The protein belongs to the AB hydrolase superfamily. Lipase family. In terms of tissue distribution, expressed by the venom gland.

It is found in the secreted. It catalyses the reaction a 1,2-diacyl-sn-glycero-3-phosphocholine + H2O = a 2-acyl-sn-glycero-3-phosphocholine + a fatty acid + H(+). Its function is as follows. Catalyzes the hydrolysis of phosphatidylcholine with phospholipase A1 activity. May act as an allergen and induce hemolytic activity. In Vespula squamosa (Southern yellow jacket), this protein is Phospholipase A1.